A 600-amino-acid chain; its full sequence is Probable translation initiation factor IF-2 (600 aa).

Positions 10-227 (LRQPIVVVLG…LLAGLTQRYL (218 aa)) constitute a tr-type G domain. Positions 19-26 (GHVDHGKT) are G1. A GTP-binding site is contributed by 19–26 (GHVDHGKT). Residues 44–48 (EMTQE) form a G2 region. A G3 region spans residues 83–86 (DTPG). Residues 83 to 87 (DTPGH) and 137 to 140 (NKID) each bind GTP. Residues 137–140 (NKID) form a G4 region. Residues 205-207 (SAK) are G5.

The protein belongs to the TRAFAC class translation factor GTPase superfamily. Classic translation factor GTPase family. IF-2 subfamily.

Function in general translation initiation by promoting the binding of the formylmethionine-tRNA to ribosomes. Seems to function along with eIF-2. The chain is Probable translation initiation factor IF-2 from Saccharolobus solfataricus (strain ATCC 35092 / DSM 1617 / JCM 11322 / P2) (Sulfolobus solfataricus).